An 833-amino-acid chain; its full sequence is Translation initiation factor IF-2 (833 aa).

The tr-type G domain maps to 331–501 (TRAPVVTVMG…LLIAEMQDLK (171 aa)). Residues 340–347 (GHVDHGKT) form a G1 region. 340–347 (GHVDHGKT) provides a ligand contact to GTP. A G2 region spans residues 365-369 (GITQH). Residues 387 to 390 (DTPG) form a G3 region. Residues 387-391 (DTPGH) and 441-444 (NKID) each bind GTP. The segment at 441-444 (NKID) is G4. Positions 477 to 479 (SAL) are G5.

Belongs to the TRAFAC class translation factor GTPase superfamily. Classic translation factor GTPase family. IF-2 subfamily.

Its subcellular location is the cytoplasm. One of the essential components for the initiation of protein synthesis. Protects formylmethionyl-tRNA from spontaneous hydrolysis and promotes its binding to the 30S ribosomal subunits. Also involved in the hydrolysis of GTP during the formation of the 70S ribosomal complex. This is Translation initiation factor IF-2 from Rickettsia canadensis (strain McKiel).